Consider the following 368-residue polypeptide: Phospho-N-acetylmuramoyl-pentapeptide-transferase (368 aa).

9 helical membrane passes run 30–50 (AAAI…IRFL), 72–92 (VPTM…LLWA), 98–118 (HVWL…IDDY), 139–159 (VALG…SVLL), 170–190 (FSVD…TAVS), 201–221 (GLAA…AYLG), 238–258 (AGEI…FLWF), 262–284 (PAEV…VIAL), and 345–365 (KIVI…LMTL).

This sequence belongs to the glycosyltransferase 4 family. MraY subfamily. It depends on Mg(2+) as a cofactor.

The protein resides in the cell inner membrane. The enzyme catalyses UDP-N-acetyl-alpha-D-muramoyl-L-alanyl-gamma-D-glutamyl-meso-2,6-diaminopimeloyl-D-alanyl-D-alanine + di-trans,octa-cis-undecaprenyl phosphate = di-trans,octa-cis-undecaprenyl diphospho-N-acetyl-alpha-D-muramoyl-L-alanyl-D-glutamyl-meso-2,6-diaminopimeloyl-D-alanyl-D-alanine + UMP. The protein operates within cell wall biogenesis; peptidoglycan biosynthesis. In terms of biological role, catalyzes the initial step of the lipid cycle reactions in the biosynthesis of the cell wall peptidoglycan: transfers peptidoglycan precursor phospho-MurNAc-pentapeptide from UDP-MurNAc-pentapeptide onto the lipid carrier undecaprenyl phosphate, yielding undecaprenyl-pyrophosphoryl-MurNAc-pentapeptide, known as lipid I. The sequence is that of Phospho-N-acetylmuramoyl-pentapeptide-transferase from Chlorobaculum parvum (strain DSM 263 / NCIMB 8327) (Chlorobium vibrioforme subsp. thiosulfatophilum).